Reading from the N-terminus, the 175-residue chain is Electron transport protein HydN (175 aa).

4Fe-4S ferredoxin-type domains follow at residues 2-32, 48-79, 80-109, and 124-157; these read NRFIIADASKCIGCRTCEVACVVSHQENQDC, KGVNISTATVCRQCEDAPCANVCPNGAISRDK, GFVHVMQERCIGCKTCVVACPYGAMEVVVR, and DKAEANKCDLCNHREDGPACMAACPTHALICVDR. Cys12, Cys15, Cys18, Cys22, Cys58, Cys61, Cys66, Cys70, Cys89, Cys92, Cys95, Cys99, Cys131, Cys134, Cys143, and Cys147 together coordinate [4Fe-4S] cluster.

The cofactor is [4Fe-4S] cluster.

Functionally, electron transport from formate to hydrogen. The chain is Electron transport protein HydN (hydN) from Escherichia coli O157:H7.